The chain runs to 779 residues: uncharacterized protein (779 aa).

Residues cysteine 72 and cysteine 75 each coordinate [4Fe-4S] cluster.

It belongs to the prokaryotic molybdopterin-containing oxidoreductase family. [4Fe-4S] cluster serves as cofactor. The cofactor is Mo-bis(molybdopterin guanine dinucleotide).

This is an uncharacterized protein from Mycobacterium bovis (strain ATCC BAA-935 / AF2122/97).